The chain runs to 74 residues: Antimicrobial peptide HsAp2 (74 aa).

Residues 1–21 form the signal peptide; that stretch reads MSRRLILILVLVAMLVKTMAG. Positions 22–33 are excised as a propeptide; sequence MESKWVETTYEI. At proline 65 the chain carries Proline amide. A propeptide spanning residues 69-74 is cleaved from the precursor; the sequence is AISEQT.

Belongs to the non-disulfide-bridged peptide (NDBP) superfamily. Medium-length antimicrobial peptide (group 3) family. As to expression, expressed by the venom gland.

The protein localises to the secreted. It localises to the target cell membrane. Possesses antimicrobial activity against both Gram-negative and Gram-positive bacteria, as well as against the fungus C.tropicalis. Also possesses a relatively high hemolytic activity. May act by disrupting the integrity of the bacterial cell membrane. The chain is Antimicrobial peptide HsAp2 from Heterometrus spinifer (Asia giant forest scorpion).